Consider the following 181-residue polypeptide: ADP-ribosylation factor 1 (181 aa).

Glycine 2 carries the N-myristoyl glycine lipid modification. Residues 3–16 (LYVSRLFNRLFQKK) are important for the stable binding to the membranes. GTP is bound by residues 27-32 (AAGKTT), 126-129 (NKQD), and alanine 160.

This sequence belongs to the small GTPase superfamily. Arf family. In terms of assembly, may interact with GTPase RAB5b.

The protein resides in the golgi apparatus membrane. The catalysed reaction is GTP + H2O = GDP + phosphate + H(+). With respect to regulation, alternates between an inactive GDP-bound form and an active GTP-bound form. Intrinsic GTPase activity is almost undetectable in vitro. Activated by a guanine nucleotide-exchange factor (GEF) and inactivated by GTPase-activating protein ARFGAP1. In terms of biological role, small GTPase involved in protein trafficking between different compartments. Modulates vesicle budding and uncoating within the Golgi complex. In its GTP-bound form, triggers the recruitment of coatomer proteins to the Golgi membrane. The hydrolysis of ARF1-bound GTP, which is mediated by ARFGAPs proteins, is required for dissociation of coat proteins from Golgi membranes and vesicles. Regulates the transport of N-acylated AK2 to the parasitophorous vacuole membrane. May be involved in the activation of lipid kinase PIP5K. In Plasmodium falciparum (isolate 3D7), this protein is ADP-ribosylation factor 1.